The sequence spans 29 residues: Cytochrome b6-f complex subunit 8 (29 aa).

A helical membrane pass occupies residues 3–23 (ILSISWAFLMVVFTFSLSLVV).

This sequence belongs to the PetN family. As to quaternary structure, the 4 large subunits of the cytochrome b6-f complex are cytochrome b6, subunit IV (17 kDa polypeptide, PetD), cytochrome f and the Rieske protein, while the 4 small subunits are PetG, PetL, PetM and PetN. The complex functions as a dimer.

The protein resides in the plastid. It is found in the chloroplast thylakoid membrane. In terms of biological role, component of the cytochrome b6-f complex, which mediates electron transfer between photosystem II (PSII) and photosystem I (PSI), cyclic electron flow around PSI, and state transitions. The polypeptide is Cytochrome b6-f complex subunit 8 (Chara vulgaris (Common stonewort)).